Here is a 360-residue protein sequence, read N- to C-terminus: Histidinol-phosphate aminotransferase (360 aa).

Lys222 carries the post-translational modification N6-(pyridoxal phosphate)lysine.

The protein belongs to the class-II pyridoxal-phosphate-dependent aminotransferase family. Histidinol-phosphate aminotransferase subfamily. Homodimer. Pyridoxal 5'-phosphate is required as a cofactor.

It carries out the reaction L-histidinol phosphate + 2-oxoglutarate = 3-(imidazol-4-yl)-2-oxopropyl phosphate + L-glutamate. It participates in amino-acid biosynthesis; L-histidine biosynthesis; L-histidine from 5-phospho-alpha-D-ribose 1-diphosphate: step 7/9. This is Histidinol-phosphate aminotransferase from Listeria welshimeri serovar 6b (strain ATCC 35897 / DSM 20650 / CCUG 15529 / CIP 8149 / NCTC 11857 / SLCC 5334 / V8).